The following is a 118-amino-acid chain: NADH-quinone oxidoreductase subunit A (118 aa).

3 consecutive transmembrane segments (helical) span residues 6–26 (LPVLIFLLVALVVGVAPLLMG), 64–84 (AILFILFDLEIAFLFPWAVVF), and 87–107 (IGMTGFLAMMLFLAILVVGFI).

The protein belongs to the complex I subunit 3 family. As to quaternary structure, NDH-1 is composed of 14 different subunits. Subunits NuoA, H, J, K, L, M, N constitute the membrane sector of the complex.

The protein localises to the cell inner membrane. It carries out the reaction a quinone + NADH + 5 H(+)(in) = a quinol + NAD(+) + 4 H(+)(out). NDH-1 shuttles electrons from NADH, via FMN and iron-sulfur (Fe-S) centers, to quinones in the respiratory chain. The immediate electron acceptor for the enzyme in this species is believed to be ubiquinone. Couples the redox reaction to proton translocation (for every two electrons transferred, four hydrogen ions are translocated across the cytoplasmic membrane), and thus conserves the redox energy in a proton gradient. The chain is NADH-quinone oxidoreductase subunit A from Acidithiobacillus ferrooxidans (strain ATCC 53993 / BNL-5-31) (Leptospirillum ferrooxidans (ATCC 53993)).